The chain runs to 1241 residues: ATP-dependent helicase/nuclease subunit A (1241 aa).

One can recognise a UvrD-like helicase ATP-binding domain in the interval 12–485 (SQWTDDQWKA…IDLAKNFRSR (474 aa)). An ATP-binding site is contributed by 33-40 (AAAGSGKT). Residues 505 to 805 (GEIDYDADAE…RIMTIHKSKG (301 aa)) enclose the UvrD-like helicase C-terminal domain.

Belongs to the helicase family. AddA subfamily. In terms of assembly, heterodimer of AddA and AddB/RexB. Mg(2+) serves as cofactor.

The enzyme catalyses Couples ATP hydrolysis with the unwinding of duplex DNA by translocating in the 3'-5' direction.. It carries out the reaction ATP + H2O = ADP + phosphate + H(+). The heterodimer acts as both an ATP-dependent DNA helicase and an ATP-dependent, dual-direction single-stranded exonuclease. Recognizes the chi site generating a DNA molecule suitable for the initiation of homologous recombination. The AddA nuclease domain is required for chi fragment generation; this subunit has the helicase and 3' -&gt; 5' nuclease activities. The polypeptide is ATP-dependent helicase/nuclease subunit A (Bacillus mycoides (strain KBAB4) (Bacillus weihenstephanensis)).